The primary structure comprises 741 residues: Translation initiation factor IF-2 (741 aa).

Composition is skewed to basic and acidic residues over residues 48 to 74 (HQYR…DKPK) and 107 to 123 (KGKE…EKKA). The tract at residues 48–158 (HQYRPKAEKK…PQPAKKEKEL (111 aa)) is disordered. The segment covering 127 to 139 (AKKKGKGPAKGKK) has biased composition (basic residues). A compositionally biased stretch (low complexity) spans 140–151 (QAAPAAKQVPQP). In terms of domain architecture, tr-type G spans 242 to 411 (ERPPVVTIMG…LLVSEMEELK (170 aa)). The interval 251–258 (GHVDHGKT) is G1. 251-258 (GHVDHGKT) is a GTP binding site. The G2 stretch occupies residues 276 to 280 (GITQH). The interval 297–300 (DTPG) is G3. GTP contacts are provided by residues 297-301 (DTPGH) and 351-354 (NKMD). The segment at 351 to 354 (NKMD) is G4. Positions 387-389 (SAK) are G5.

The protein belongs to the TRAFAC class translation factor GTPase superfamily. Classic translation factor GTPase family. IF-2 subfamily.

The protein localises to the cytoplasm. Functionally, one of the essential components for the initiation of protein synthesis. Protects formylmethionyl-tRNA from spontaneous hydrolysis and promotes its binding to the 30S ribosomal subunits. Also involved in the hydrolysis of GTP during the formation of the 70S ribosomal complex. The polypeptide is Translation initiation factor IF-2 (infB) (Geobacillus stearothermophilus (Bacillus stearothermophilus)).